A 98-amino-acid polypeptide reads, in one-letter code: Essential MCU regulator, mitochondrial (98 aa).

The chain crosses the membrane as a helical span at residues 52-72 (ITPFGLFGIIATVIPGLLIGA).

This sequence belongs to the SMDT1/EMRE family.

Its subcellular location is the mitochondrion inner membrane. In terms of biological role, essential regulatory subunit of the mitochondrial calcium uniporter (mcu) channel, a protein that mediates calcium uptake into mitochondria. The sequence is that of Essential MCU regulator, mitochondrial from Anopheles gambiae (African malaria mosquito).